A 293-amino-acid chain; its full sequence is Protease HtpX homolog (293 aa).

Transmembrane regions (helical) follow at residues 4-24 and 39-59; these read IFLFVATNIAVIAVMSIVLSL and PMLLVFSLVVGFTGAIISLLI. Residue His-144 participates in Zn(2+) binding. Glu-145 is a catalytic residue. His-148 lines the Zn(2+) pocket. Helical transmembrane passes span 159-179 and 200-220; these read LVQGVVNTFVVFLARVVGYFV and ITVLVCQVVFGIAASVIVAWF. Position 225 (Glu-225) interacts with Zn(2+).

This sequence belongs to the peptidase M48B family. Zn(2+) is required as a cofactor.

The protein resides in the cell inner membrane. This Herminiimonas arsenicoxydans protein is Protease HtpX homolog.